Here is a 290-residue protein sequence, read N- to C-terminus: Ankyrin repeat and SOCS box protein 9 (290 aa).

At M1 the chain carries N-acetylmethionine. The segment covering 1–11 (MDGEQRGRSDR) has biased composition (basic and acidic residues). The interval 1–20 (MDGEQRGRSDRPGGSPHLPF) is disordered. 6 ANK repeats span residues 31-60 (SDWS…PVNI), 64-93 (DHVS…QVNG), 97-126 (DWRT…TPHP), 129-158 (ELAS…NIDY), 162-191 (HLGT…SVNQ), and 194-223 (GLDS…NAQA). Residues 236–290 (PLESPLIQIFLQNEGPQSLRQLCRLRIRKCFGIRQHHKISELLLPEDLKRFLLHL) enclose the SOCS box domain.

This sequence belongs to the ankyrin SOCS box (ASB) family. As to quaternary structure, substrate-recognition component of the ECS(ASB9) complex, composed of ASB9, CUL5, ELOB, ELOC and RNF7/RBX2.

The protein resides in the mitochondrion. Its pathway is protein modification; protein ubiquitination. Substrate-recognition component of a cullin-5-RING E3 ubiquitin-protein ligase complex (ECS complex, also named CRL5 complex), which mediates the ubiquitination and subsequent proteasomal degradation of target proteins. The ECS(ASB9) complex catalyzes ubiquitination of creatine kinases CKB and CKMT1A. The polypeptide is Ankyrin repeat and SOCS box protein 9 (Mus musculus (Mouse)).